A 519-amino-acid polypeptide reads, in one-letter code: Histidine--tRNA ligase, cytoplasmic (519 aa).

Residues 135 to 137 (DLT), arginine 162, glutamine 178, aspartate 182, arginine 331, and 335 to 336 (YY) contribute to the L-histidine site.

Belongs to the class-II aminoacyl-tRNA synthetase family. In terms of assembly, homodimer.

The protein resides in the cytoplasm. It catalyses the reaction tRNA(His) + L-histidine + ATP = L-histidyl-tRNA(His) + AMP + diphosphate + H(+). Its function is as follows. Catalyzes the ATP-dependent ligation of histidine to the 3'-end of its cognate tRNA, via the formation of an aminoacyl-adenylate intermediate (His-AMP). Plays a role in axon guidance. This is Histidine--tRNA ligase, cytoplasmic (hars1) from Takifugu rubripes (Japanese pufferfish).